The sequence spans 54 residues: Large ribosomal subunit protein bL33 (54 aa).

The protein belongs to the bacterial ribosomal protein bL33 family.

This is Large ribosomal subunit protein bL33 from Corynebacterium efficiens (strain DSM 44549 / YS-314 / AJ 12310 / JCM 11189 / NBRC 100395).